Reading from the N-terminus, the 409-residue chain is D-galactonate dehydratase family member Achl_0790 (409 aa).

Aspartate 217 contacts Mg(2+). Histidine 219 is a D-arabinonate binding site. Positions 243 and 269 each coordinate Mg(2+). D-arabinonate-binding residues include glutamate 269, arginine 290, histidine 319, and glutamate 346.

This sequence belongs to the mandelate racemase/muconate lactonizing enzyme family. GalD subfamily.

Functionally, has no detectable activity with D-mannonate and with a panel of 70 other acid sugars (in vitro), in spite of the conservation of the residues that are expected to be important for catalytic activity and cofactor binding. May have evolved a divergent function. The sequence is that of D-galactonate dehydratase family member Achl_0790 from Pseudarthrobacter chlorophenolicus (strain ATCC 700700 / DSM 12829 / CIP 107037 / JCM 12360 / KCTC 9906 / NCIMB 13794 / A6) (Arthrobacter chlorophenolicus).